A 126-amino-acid polypeptide reads, in one-letter code: Adult-specific rigid cuticular protein 12.4 (126 aa).

The Chitin-binding type R&amp;R domain occupies 9-87; the sequence is GGAYNFGFNT…AMAALAPKAP (79 aa).

Its function is as follows. Component of the rigid cuticle of the spider. In Araneus diadematus (European garden spider), this protein is Adult-specific rigid cuticular protein 12.4.